The chain runs to 146 residues: MNLLLLLQVASFLSDSKVPGEDGTSSTSGMLDLLRDQVDSLSINDSTTEPKTRLDPGLYPWLKWTETAYRSSTRSLASTIVMGALVQQRGSGNGITMRELELSLGLDFTSECDWLKTCYVNKNFVFLSEKEIAVNMEVEKFICNEN.

As to quaternary structure, interacts with host HSC70.

Its subcellular location is the host cytoplasm. May mediate the nuclear export of encapsidated genomic RNAs (ribonucleoproteins, RNPs). Interaction of viral NEP with M1-Hsc70 is thought to promote nuclear export of the viral encapsidated genomes. This chain is Nuclear export protein, found in Infectious salmon anemia virus (isolate Atlantic salmon/Norway/810/9/99) (ISAV).